The primary structure comprises 326 residues: Acetyl-coenzyme A carboxylase carboxyl transferase subunit alpha (326 aa).

In terms of domain architecture, CoA carboxyltransferase C-terminal spans 44–298 (KLETRAMQLR…KQALLDNLDE (255 aa)).

It belongs to the AccA family. Acetyl-CoA carboxylase is a heterohexamer composed of biotin carboxyl carrier protein (AccB), biotin carboxylase (AccC) and two subunits each of ACCase subunit alpha (AccA) and ACCase subunit beta (AccD).

The protein resides in the cytoplasm. The catalysed reaction is N(6)-carboxybiotinyl-L-lysyl-[protein] + acetyl-CoA = N(6)-biotinyl-L-lysyl-[protein] + malonyl-CoA. Its pathway is lipid metabolism; malonyl-CoA biosynthesis; malonyl-CoA from acetyl-CoA: step 1/1. Its function is as follows. Component of the acetyl coenzyme A carboxylase (ACC) complex. First, biotin carboxylase catalyzes the carboxylation of biotin on its carrier protein (BCCP) and then the CO(2) group is transferred by the carboxyltransferase to acetyl-CoA to form malonyl-CoA. The protein is Acetyl-coenzyme A carboxylase carboxyl transferase subunit alpha of Trichormus variabilis (strain ATCC 29413 / PCC 7937) (Anabaena variabilis).